A 411-amino-acid chain; its full sequence is Glutamate dehydrogenase (411 aa).

Residue Lys-102 is part of the active site.

Belongs to the Glu/Leu/Phe/Val dehydrogenases family.

The enzyme catalyses L-glutamate + NAD(+) + H2O = 2-oxoglutarate + NH4(+) + NADH + H(+). It carries out the reaction L-glutamate + NADP(+) + H2O = 2-oxoglutarate + NH4(+) + NADPH + H(+). The sequence is that of Glutamate dehydrogenase (GDH) from Vitis vinifera (Grape).